The chain runs to 327 residues: MSASAAVSSTCAAASSTTSRRSSSSPASRVQATPRRSLPSRLVASRTSPRSPVVPPVYATASPGGAGGTTAAAARKKLLIFDAEEYLAESLAKYTARLSGEAVAERGAFTVALSGGSLIKALRKLTESPYLEAVEWSKWHVFWVDERVVPKDHADSNYKLAMDGLLSKVPIPASQIYAINDTLSAEGAADEYETCLKQLVNDGVVAISEVTGFPKLDLMLLGMGPDGHVASLFPGHPVVNENLKWVSYIKDSPKPPPERITFTFPLVNSSAHIALVVTGAGKAGAVHKAFSDKQSSSDLLPVEMVSQQEGVLTWFTDKPAVSMLSSI.

Low complexity-rich tracts occupy residues 1-29 (MSASAAVSSTCAAASSTTSRRSSSSPASR) and 43-66 (VASRTSPRSPVVPPVYATASPGGA). Positions 1 to 66 (MSASAAVSST…VYATASPGGA (66 aa)) are disordered. A chloroplast-targeting transit peptide spans 1-71 (MSASAAVSST…SPGGAGGTTA (71 aa)).

It belongs to the glucosamine/galactosamine-6-phosphate isomerase family. 6-phosphogluconolactonase subfamily.

It is found in the plastid. It localises to the chloroplast. The enzyme catalyses 6-phospho-D-glucono-1,5-lactone + H2O = 6-phospho-D-gluconate + H(+). Its pathway is carbohydrate degradation; pentose phosphate pathway; D-ribulose 5-phosphate from D-glucose 6-phosphate (oxidative stage): step 2/3. Hydrolysis of 6-phosphogluconolactone to 6-phosphogluconate. The protein is Probable 6-phosphogluconolactonase 3, chloroplastic of Oryza sativa subsp. indica (Rice).